The sequence spans 115 residues: Large ribosomal subunit protein bL20 (115 aa).

This sequence belongs to the bacterial ribosomal protein bL20 family.

In terms of biological role, binds directly to 23S ribosomal RNA and is necessary for the in vitro assembly process of the 50S ribosomal subunit. It is not involved in the protein synthesizing functions of that subunit. The protein is Large ribosomal subunit protein bL20 of Chlorobium luteolum (strain DSM 273 / BCRC 81028 / 2530) (Pelodictyon luteolum).